We begin with the raw amino-acid sequence, 854 residues long: Golgin subfamily A member 6-like protein 22 (854 aa).

Disordered stretches follow at residues 1-114 (MLMW…HQEA), 320-348 (QEEKIREQEEKMRRQEEMMWEKEEKMRRQ), 366-447 (MHEQ…MWRQ), 481-568 (QEEK…MWRQ), 581-681 (RQEE…EQEE), and 714-854 (QEEK…MQEH). Positions 15–35 (LPTHPHLPTHPHLPTHPHLPT) are enriched in basic residues. Positions 45-66 (MSKETRQSKLAEAKEQLTDHHP) are enriched in basic and acidic residues. Composition is skewed to polar residues over residues 67–77 (QTNPSVGTAAS) and 85–97 (NNGTSPETTTSGG). Residues 100-114 (SPEDEQKASHQHQEA) show a composition bias toward basic and acidic residues. A coiled-coil region spans residues 103–854 (DEQKASHQHQ…RQQEEKMQEH (752 aa)).

The protein belongs to the GOLGA6 family.

This is Golgin subfamily A member 6-like protein 22 from Homo sapiens (Human).